A 294-amino-acid chain; its full sequence is BOI-related E3 ubiquitin-protein ligase 1 (294 aa).

The tract at residues 168-204 (LQERVKNLYVENQIWRDLAQTNEATANNLRSNLEQVL) is WRD domain. Residues 183-212 (RDLAQTNEATANNLRSNLEQVLAQVDDLDA) adopt a coiled-coil conformation. The segment at 244 to 281 (CKRCGELTASVLVLPCRHLCLCTVCGSSALLRTCPVCD) adopts an RING-type zinc-finger fold.

In terms of assembly, interacts with the DELLA proteins GAI, RGA, RGL1, RGL2 and RGL3.

The enzyme catalyses S-ubiquitinyl-[E2 ubiquitin-conjugating enzyme]-L-cysteine + [acceptor protein]-L-lysine = [E2 ubiquitin-conjugating enzyme]-L-cysteine + N(6)-ubiquitinyl-[acceptor protein]-L-lysine.. It functions in the pathway protein degradation; proteasomal ubiquitin-dependent pathway. Its function is as follows. E3 ubiquitin-protein ligase involved in regulation of abiotic stress responses. Not involved in ubiquitination of MYB108/BOS1. Has no effect on the stability of the DELLA proteins. This chain is BOI-related E3 ubiquitin-protein ligase 1 (BRG1), found in Arabidopsis thaliana (Mouse-ear cress).